Here is a 304-residue protein sequence, read N- to C-terminus: Probable 5-dehydro-4-deoxyglucarate dehydratase (304 aa).

The protein belongs to the DapA family.

It carries out the reaction 5-dehydro-4-deoxy-D-glucarate + H(+) = 2,5-dioxopentanoate + CO2 + H2O. It participates in carbohydrate acid metabolism; D-glucarate degradation; 2,5-dioxopentanoate from D-glucarate: step 2/2. In Rhodococcus jostii (strain RHA1), this protein is Probable 5-dehydro-4-deoxyglucarate dehydratase.